Here is a 463-residue protein sequence, read N- to C-terminus: Type IV secretion system protein PtlD homolog (463 aa).

The N-terminal stretch at 1-24 (MAGLSRILLSCTLACLLAGQAAQA) is a signal peptide. A run of 5 helical transmembrane segments spans residues 118-138 (LQPL…YALL), 232-252 (WLLC…LAAS), 253-273 (LLIV…LFLV), 294-314 (ALVF…VLAG), and 333-353 (MLAA…VPLA). Low complexity predominate over residues 376 to 410 (AHRQAAARQYAPRPAAAAAAAGPHQAGTYAASATP). Positions 376–463 (AHRQAAARQY…RVLPRKPNLP (88 aa)) are disordered. Residues 411 to 420 (APAPARPAPS) are compositionally biased toward pro residues. The segment covering 441–455 (VRRDDRPAPAPDRRV) has biased composition (basic and acidic residues).

It localises to the cell membrane. The protein is Type IV secretion system protein PtlD homolog (ptlD) of Bordetella parapertussis (strain 12822 / ATCC BAA-587 / NCTC 13253).